Reading from the N-terminus, the 558-residue chain is MKAAILATAAALTGSALADVAHMRRGHDSFHHRRAMHAQEPEETCGCTTEVITFYGSPTLVPISTPSATPTPAPAPETTSTEEVTTTLHSTSTSTVTVTATPETPEVTLPTPGVTSFSSTGVYTIPATTLTVTDTTTVCGATSTELPSGTATYGGVTTVVETSTTVVCPYATVKPSGSTVTSVIETTTYVCPSAGTYTVVPPTTTYVPTSTVMVYPTPATFTPGTYTQDAQTVTVTRTDYTYVCPTFHPELPSSSAPAPTTSAVPTTTAVPTSTVVPSSTTSVPASSSSSSAEVPQTTGSGQMGMTYSPYTNAGGCKSKADVLQDIATIKQKGFTHVRVYSTDCSSLEWIGEGAKQQGLIMILGVYIDSSGVSGAQSQVTDIANWAEWDLVSLIVVGNEAIQNGYCTASELASFITSAKQAFKAAGYSGQVTTTEPINVWESSGSALCSSIDILGANIHPFFNSEVTASQAGKFVQSQVDILEKICPGKDVINLETGWPSKGSANGLAIPGTSQQSEAIKSLRNDVGALSVFFSFSNDLWKSPGAFDVEQYWGCIDQF.

The first 18 residues, 1-18, serve as a signal peptide directing secretion; that stretch reads MKAAILATAAALTGSALA. 2 disordered regions span residues 64-105 and 251-305; these read STPS…PETP and LPSS…QMGM. Composition is skewed to low complexity over residues 76-105 and 252-292; these read PETT…PETP and PSSS…SSSA. The span at 293–305 shows a compositional bias: polar residues; it reads EVPQTTGSGQMGM. The Proton donor role is filled by E399. Residue E495 is the Nucleophile of the active site.

The protein belongs to the glycosyl hydrolase 17 family.

The protein resides in the secreted. It is found in the cell wall. It catalyses the reaction Hydrolysis of terminal, non-reducing beta-D-glucosyl residues with release of beta-D-glucose.. It participates in glycan metabolism; cellulose degradation. Its function is as follows. Beta-glucosidases are one of a number of cellulolytic enzymes involved in the degradation of cellulosic biomass. Catalyzes the last step releasing glucose from the inhibitory cellobiose. The polypeptide is Probable beta-glucosidase btgE (btgE) (Aspergillus terreus (strain NIH 2624 / FGSC A1156)).